The sequence spans 504 residues: Sodium-coupled neutral amino acid transporter 3 (504 aa).

A Phosphoserine; by PKC modification is found at Ser-52. Residue Asn-73 is glycosylated (N-linked (GlcNAc...) asparagine). 5 helical membrane-spanning segments follow: residues 82-102 (GILG…LFLL), 105-125 (VALL…IVGI), 143-163 (AAAL…LYII), 186-206 (MDGN…LALM), and 212-232 (LGYS…AVIY). A disulfide bond links Cys-239 and Cys-275. N-linked (GlcNAc...) asparagine glycans are attached at residues Asn-247 and Asn-251. Residues 287-307 (AYTIPIMAFAFVCHPEVLPIY) form a helical membrane-spanning segment. N-linked (GlcNAc...) asparagine glycosylation occurs at Asn-323. Helical transmembrane passes span 324–344 (LSIA…YLTF), 366–386 (ILCV…IVLF), 408–428 (VLIA…APNI), 431–451 (IFGI…PAIF), and 469–489 (ILAL…LSFI).

It belongs to the amino acid/polyamine transporter 2 family. Post-translationally, phosphorylation at Ser-52 induces internalization and sequestration into an intracellular reservoir. During dephosphorylation by protein phosphatases, can recycle back to the plasma membrane and regain activity. Prolonged phosphorylation results in its degradation. Highly expressed in liver. Expressed in skeletal muscle. Expressed in kidney, heart and brain. Not detected in gut, lung or spleen. Expressed ubiquitously in hepatocytes in liver whereas in kidney expression is restricted to the medulla. Within brain, expressed in glial cells. In the cerebellum, expressed on Bergmann glial fibers in the molecular layer and astrocytes in the granule layer. Expressed in brain kidney and liver (at protein level). In the adult kidney, highly expressed in the outer strip of the outer medulla and medullary rays penetrating into the kidney cortex (at protein level).

It localises to the cell membrane. The protein localises to the basolateral cell membrane. It catalyses the reaction L-glutamine(out) + Na(+)(out) + H(+)(in) = L-glutamine(in) + Na(+)(in) + H(+)(out). The enzyme catalyses L-asparagine(out) + Na(+)(out) + H(+)(in) = L-asparagine(in) + Na(+)(in) + H(+)(out). The catalysed reaction is L-histidine(out) + Na(+)(out) + H(+)(in) = L-histidine(in) + Na(+)(in) + H(+)(out). With respect to regulation, L-glutamine efflux and L-glutamine uptake are regulated by CO2/HCO3(-) through SLC4A4 leading to modulation of cytosolic pH and Na(+)concentration. In terms of biological role, symporter that cotransports specific neutral amino acids and sodium ions, coupled to an H(+) antiporter activity. Mainly participates in the glutamate-GABA-glutamine cycle in brain where it transports L-glutamine from astrocytes in the intercellular space for the replenishment of both neurotransmitters glutamate and gamma-aminobutyric acid (GABA) in neurons. Also functions as the major influx transporter in ganglion cells mediating the uptake of glutamine. The transport activity is specific for L-glutamine, L-histidine and L-asparagine. The transport is electroneutral coupled to the cotransport of 1 Na(+) and the antiport of 1 H(+), pH dependent, saturable, Li(+) tolerant and functions in both direction depending on the concentration gradients of its substrates and cotransported ions. Also mediates an amino acid-gated H(+) conductance that is not stoichiometrically coupled to the amino acid transport but which influences the ionic gradients that drive the amino acid transport. In addition, may play a role in nitrogen metabolism, amino acid homeostasis, glucose metabolism and renal ammoniagenesis. The polypeptide is Sodium-coupled neutral amino acid transporter 3 (Rattus norvegicus (Rat)).